The sequence spans 588 residues: DNA mismatch repair protein MutL (588 aa).

It belongs to the DNA mismatch repair MutL/HexB family.

In terms of biological role, this protein is involved in the repair of mismatches in DNA. It is required for dam-dependent methyl-directed DNA mismatch repair. May act as a 'molecular matchmaker', a protein that promotes the formation of a stable complex between two or more DNA-binding proteins in an ATP-dependent manner without itself being part of a final effector complex. The chain is DNA mismatch repair protein MutL from Methanocorpusculum labreanum (strain ATCC 43576 / DSM 4855 / Z).